Here is a 202-residue protein sequence, read N- to C-terminus: NADH-quinone oxidoreductase subunit B (202 aa).

4 residues coordinate [4Fe-4S] cluster: cysteine 81, cysteine 82, cysteine 146, and cysteine 176.

It belongs to the complex I 20 kDa subunit family. In terms of assembly, NDH-1 is composed of 14 different subunits. Subunits NuoB, C, D, E, F, and G constitute the peripheral sector of the complex. [4Fe-4S] cluster serves as cofactor.

It is found in the cell inner membrane. The catalysed reaction is a quinone + NADH + 5 H(+)(in) = a quinol + NAD(+) + 4 H(+)(out). Its function is as follows. NDH-1 shuttles electrons from NADH, via FMN and iron-sulfur (Fe-S) centers, to quinones in the respiratory chain. The immediate electron acceptor for the enzyme in this species is believed to be ubiquinone. Couples the redox reaction to proton translocation (for every two electrons transferred, four hydrogen ions are translocated across the cytoplasmic membrane), and thus conserves the redox energy in a proton gradient. The sequence is that of NADH-quinone oxidoreductase subunit B from Bradyrhizobium diazoefficiens (strain JCM 10833 / BCRC 13528 / IAM 13628 / NBRC 14792 / USDA 110).